A 318-amino-acid chain; its full sequence is DNA polymerase IV (318 aa).

Positions 6 to 186 (IIHIDMDAFY…LPLGKIPGVG (181 aa)) constitute a UmuC domain. 2 residues coordinate Mg(2+): D10 and D104. The active site involves E105.

It belongs to the DNA polymerase type-Y family. As to quaternary structure, monomer. Mg(2+) serves as cofactor.

The protein localises to the cytoplasm. It catalyses the reaction DNA(n) + a 2'-deoxyribonucleoside 5'-triphosphate = DNA(n+1) + diphosphate. Functionally, poorly processive, error-prone DNA polymerase involved in untargeted mutagenesis. Copies undamaged DNA at stalled replication forks, which arise in vivo from mismatched or misaligned primer ends. These misaligned primers can be extended by PolIV. Exhibits no 3'-5' exonuclease (proofreading) activity. May be involved in translesional synthesis, in conjunction with the beta clamp from PolIII. The polypeptide is DNA polymerase IV (Neisseria meningitidis serogroup B (strain ATCC BAA-335 / MC58)).